Here is a 341-residue protein sequence, read N- to C-terminus: MKKLISIIFIFVLGVVGSLTAAVSAEAASALNSGKVNPLADFSLKGFAALNGGTTGGEGGQTVTVTTGDQLIAALKNKNANTPLKIYVNGTITTSNTSASKIDVKDVSNVSIVGSGTKGELKGIGIKIWRANNIIIRNLKIHEVASGDKDAIGIEGPSKNIWVDHNELYHSLNVDKDYYDGLFDVKRDAEYITFSWNYVHDGWKSMLMGSSDSDNYNRTITFHHNWFENLNSRVPSFRFGEGHIYNNYFNKIIDSGINSRMGARIRIENNLFENAKDPIVSWYSSSPGYWHVSNNKFVNSRGSMPTTSTTTYNPPYSYSLDNVDNVKSIVKQNAGVGKINP.

Positions 1–27 are cleaved as a signal peptide; it reads MKKLISIIFIFVLGVVGSLTAAVSAEA. Positions 28-39 are excised as a propeptide; it reads ASALNSGKVNPL. PbH1 repeat units follow at residues 131–156 and 158–186; these read ANNI…GIEG and SKNI…FDVK. 3 residues coordinate Ca(2+): aspartate 150, aspartate 180, and aspartate 184. Arginine 233 is a catalytic residue. PbH1 repeat units follow at residues 262-283 and 287-322; these read GARI…VSWY and PGYW…SLDN.

Belongs to the polysaccharide lyase 1 family. Ca(2+) serves as cofactor.

The protein resides in the secreted. The enzyme catalyses eliminative cleavage of unsaturated trigalacturonate as the major product from the reducing end of polygalacturonic acid/pectate.. Its function is as follows. Cleaves unsaturated oligo-galacturonides from pectin. The major product is trigalacturonate; digalacturonate and tetragalacturonate are also produced. Activity on methylated pectins decreases with an increasing degree of methylation. The protein is Pectate trisaccharide-lyase of Bacillus licheniformis (strain ATCC 14580 / DSM 13 / JCM 2505 / CCUG 7422 / NBRC 12200 / NCIMB 9375 / NCTC 10341 / NRRL NRS-1264 / Gibson 46).